The sequence spans 535 residues: Beta-amylase 1, chloroplastic (535 aa).

A chloroplast-targeting transit peptide spans 1 to 36 (MALNLAQSAAAAACFATAGDARRAASVVAMPSSSSS). Substrate is bound by residues D115, H155, and D163. The active-site Proton donor is E247. Substrate-binding residues include K361, H366, and T408. E446 (proton acceptor) is an active-site residue. Substrate-binding positions include 447–448 (NA) and R480.

The protein belongs to the glycosyl hydrolase 14 family.

It localises to the plastid. The protein resides in the chloroplast. The catalysed reaction is Hydrolysis of (1-&gt;4)-alpha-D-glucosidic linkages in polysaccharides so as to remove successive maltose units from the non-reducing ends of the chains.. In terms of biological role, possesses beta-amylase activity in vitro. May be involved in cold resistance by mediating the accumulation of maltose upon freezing stress, thus contributing to the protection of membranes. This Oryza sativa subsp. japonica (Rice) protein is Beta-amylase 1, chloroplastic.